The primary structure comprises 199 residues: Thymidylate kinase (199 aa).

7–14 (GTEGVGKT) contacts ATP.

Belongs to the thymidylate kinase family.

It catalyses the reaction dTMP + ATP = dTDP + ADP. In terms of biological role, phosphorylation of dTMP to form dTDP in both de novo and salvage pathways of dTTP synthesis. This is Thymidylate kinase from Acinetobacter baumannii (strain AB307-0294).